Here is a 460-residue protein sequence, read N- to C-terminus: tRNA modification GTPase MnmE (460 aa).

Residues Arg29, Glu86, and Lys126 each contribute to the (6S)-5-formyl-5,6,7,8-tetrahydrofolate site. Positions 222-383 (GMRVVIAGRP…LAEHLKECMG (162 aa)) constitute a TrmE-type G domain. Position 232 (Asn232) interacts with K(+). Residues 232–237 (NAGKSS), 251–257 (TAIAGTT), 276–279 (DTAG), and 341–344 (NKAD) contribute to the GTP site. Ser236 provides a ligand contact to Mg(2+). Positions 251, 253, and 256 each coordinate K(+). Residue Thr257 participates in Mg(2+) binding. (6S)-5-formyl-5,6,7,8-tetrahydrofolate is bound at residue Lys460.

Belongs to the TRAFAC class TrmE-Era-EngA-EngB-Septin-like GTPase superfamily. TrmE GTPase family. In terms of assembly, homodimer. Heterotetramer of two MnmE and two MnmG subunits. K(+) serves as cofactor.

It is found in the cytoplasm. Its function is as follows. Exhibits a very high intrinsic GTPase hydrolysis rate. Involved in the addition of a carboxymethylaminomethyl (cmnm) group at the wobble position (U34) of certain tRNAs, forming tRNA-cmnm(5)s(2)U34. The sequence is that of tRNA modification GTPase MnmE from Pseudoalteromonas atlantica (strain T6c / ATCC BAA-1087).